Here is a 506-residue protein sequence, read N- to C-terminus: Tyrosine-protein phosphatase non-receptor type substrate 1 (506 aa).

Residues 1–29 (MEPARPAPGRLRPLLCLLLAASNAWTGTA) form the signal peptide. The Ig-like V-type domain maps to 30–145 (GDGELQVIQP…SGPGTHLTVS (116 aa)). The Extracellular portion of the chain corresponds to 30–371 (GDGELQVIQP…PGPNDSNWTS (342 aa)). Cys-55 and Cys-121 are joined by a disulfide. N-linked (GlcNAc...) asparagine glycosylation occurs at Asn-92. Residues 136 to 159 (SGPGTHLTVSAKPSPPVLSGPTVR) are disordered. Ig-like C1-type domains lie at 148 to 248 (PSPP…ANLS) and 255 to 348 (PTLE…HTLE). Residues Asn-167, Asn-179, Asn-204, Asn-210, Asn-246, Asn-270, Asn-292, Asn-311, Asn-319, Asn-344, Asn-365, and Asn-368 are each glycosylated (N-linked (GlcNAc...) asparagine). Cysteines 170 and 228 form a disulfide. The cysteines at positions 273 and 331 are disulfide-linked. The interval 344–364 (NHTLEVSAPQKDQDTGQTPGP) is disordered. The helical transmembrane segment at 372-392 (IFIVVGVVCALLVALLIAALY) threads the bilayer. Over 393-506 (LLRIRQNKAK…EYASVQVQRK (114 aa)) the chain is Cytoplasmic. The tract at residues 402-468 (KGSTSSTRLH…QARPPPVSED (67 aa)) is disordered. Over residues 409-418 (RLHEPEKNTR) the composition is skewed to basic and acidic residues. Over residues 419-429 (ETTQIQDNNDI) the composition is skewed to polar residues. Tyr-431 bears the Phosphotyrosine; by Tyr-kinases mark. Residues 432-435 (ADLN) carry the SH2-binding motif. The SH3-binding motif lies at 441 to 446 (KSTPKA). Residues 444-456 (PKANEPNNHTEYA) show a composition bias toward polar residues. Phosphotyrosine; by Tyr-kinases is present on residues Tyr-455, Tyr-472, and Tyr-498. 3 short sequence motifs (SH2-binding) span residues 455 to 458 (YASI), 472 to 475 (YADL), and 498 to 501 (YASV). A disordered region spans residues 480-506 (LNRTPKQPAPKPEPSYSEYASVQVQRK). The span at 497-506 (EYASVQVQRK) shows a compositional bias: polar residues.

Binds PTPN11 when tyrosine-phosphorylated, except in macrophages, where it primarily binds PTPN6. Binds GRB2 in vitro. Binds JAK2 irrespective of its phosphorylation status and forms a stable complex. Binds SCAP1 and/or SCAP2. The resulting complex recruits FYB1. Binds FGR and PTK2B. Interacts with TRIM2. In terms of processing, phosphorylated on tyrosine residues. As to expression, highly expressed in spleen macrophages. Detected in skin dendritic cells.

The protein resides in the membrane. Immunoglobulin-like cell surface receptor for CD47. Acts as docking protein and induces translocation of PTPN6, PTPN11 and other binding partners from the cytosol to the plasma membrane. Supports adhesion of cerebellar neurons, neurite outgrowth and glial cell attachment. May play a key role in intracellular signaling during synaptogenesis and in synaptic function. Involved in the negative regulation of receptor tyrosine kinase-coupled cellular responses induced by cell adhesion, growth factors or insulin. Mediates negative regulation of phagocytosis, mast cell activation and dendritic cell activation. CD47 binding prevents maturation of immature dendritic cells and inhibits cytokine production by mature dendritic cells. Plays a role in antiviral immunity and limits new world arenavirus infection by decreasing virus internalization. Receptor for THBS1. Interaction with THBS1 stimulates phosphorylation of SIRPA. In response to THBS1, involved in ROS signaling in non-phagocytic cells, stimulating NADPH oxidase-derived ROS production. The sequence is that of Tyrosine-protein phosphatase non-receptor type substrate 1 (SIRPA) from Bos taurus (Bovine).